We begin with the raw amino-acid sequence, 322 residues long: RNA-binding protein KhpB (322 aa).

A jag_N domain region spans residues 3-52 (VFEGNTVAAAIAAGLKQLHRTRDQVEVEVIAEAKKGFLGLGKHPAQVRLT). The span at 58-82 (AAPATTPTSATATAQQSVATESTTA) shows a compositional bias: low complexity. Residues 58 to 162 (AAPATTPTSA…AADQSQTPRT (105 aa)) form a disordered region. Thr89 is subject to Phosphothreonine. The span at 89–99 (TVQTPKSTPTR) shows a compositional bias: polar residues. The segment covering 100–129 (QAKTSQATTSAAKPATSKAKAVAKPASMAV) has biased composition (low complexity). Positions 141 to 161 (SKPATTSKTKSVAADQSQTPR) are enriched in polar residues. Positions 174-251 (ETAVRALCDY…ASHVNVVLDV (78 aa)) constitute a KH domain. Positions 256 to 322 (ERRAATLKRL…HRAVVVAIRK (67 aa)) constitute an R3H domain.

As to quaternary structure, forms a complex with KhpA.

Its subcellular location is the cytoplasm. Functionally, a probable RNA chaperone. Forms a complex with KhpA which binds to cellular RNA and controls its expression. Plays a role in peptidoglycan (PG) homeostasis and cell length regulation. In terms of biological role, necessary for correct cell elongation. The chain is RNA-binding protein KhpB from Lactiplantibacillus plantarum (strain ATCC BAA-793 / NCIMB 8826 / WCFS1) (Lactobacillus plantarum).